An 819-amino-acid polypeptide reads, in one-letter code: NEDD4-binding protein 1 (819 aa).

A compositionally biased stretch (polar residues) spans M1–G13. The segment at M1–V20 is disordered. The KH-like domain occupies K80 to D164. Over residues D226–R241 the composition is skewed to basic and acidic residues. Disordered regions lie at residues D226 to P247 and K666 to R736. The RNase NYN domain maps to L517 to D669. The span at K673–E689 shows a compositional bias: polar residues. The segment at R772–D819 is coCUN.

This sequence belongs to the N4BP1 family.

The protein localises to the cytoplasm. It localises to the cytosol. Its subcellular location is the nucleus. It is found in the nucleolus. The protein resides in the PML body. Potent suppressor of cytokine production that acts as a regulator of innate immune signaling and inflammation. Acts as a key negative regulator of select cytokine and chemokine responses elicited by TRIF-independent Toll-like receptors (TLRs), thereby limiting inflammatory cytokine responses to minor insults. Has ribonuclease activity. This chain is NEDD4-binding protein 1, found in Xenopus tropicalis (Western clawed frog).